Consider the following 147-residue polypeptide: uncharacterized protein (147 aa).

This sequence belongs to the RTX toxin acyltransferase family.

This is an uncharacterized protein from Synechocystis sp. (strain ATCC 27184 / PCC 6803 / Kazusa).